Here is a 100-residue protein sequence, read N- to C-terminus: Integration host factor subunit alpha (100 aa).

It belongs to the bacterial histone-like protein family. In terms of assembly, heterodimer of an alpha and a beta chain.

Functionally, this protein is one of the two subunits of integration host factor, a specific DNA-binding protein that functions in genetic recombination as well as in transcriptional and translational control. The chain is Integration host factor subunit alpha from Alcanivorax borkumensis (strain ATCC 700651 / DSM 11573 / NCIMB 13689 / SK2).